The following is a 662-amino-acid chain: Bifunctional polymyxin resistance protein ArnA (662 aa).

Residues 1 to 307 form a formyltransferase ArnAFT region; the sequence is MTSKAVVFAY…ELGLVEGARL (307 aa). Histidine 106 functions as the Proton donor; for formyltransferase activity in the catalytic mechanism. Residues arginine 116 and 138 to 142 each bind (6R)-10-formyltetrahydrofolate; that span reads IERAD. The tract at residues 316–662 is dehydrogenase ArnADH; sequence RRTRVLILGV…EALREREAQA (347 aa). NAD(+) is bound by residues aspartate 349 and 370–371; that span reads DI. Residues alanine 395, tyrosine 400, and 434–435 contribute to the UDP-alpha-D-glucuronate site; that span reads TS. Catalysis depends on glutamate 436, which acts as the Proton acceptor; for decarboxylase activity. Residues arginine 462, asparagine 493, 527 to 536, and tyrosine 614 each bind UDP-alpha-D-glucuronate; that span reads RLVDGGAQKR. Residue arginine 620 is the Proton donor; for decarboxylase activity of the active site.

It in the N-terminal section; belongs to the Fmt family. UDP-L-Ara4N formyltransferase subfamily. This sequence in the C-terminal section; belongs to the NAD(P)-dependent epimerase/dehydratase family. UDP-glucuronic acid decarboxylase subfamily. As to quaternary structure, homohexamer, formed by a dimer of trimers.

It catalyses the reaction UDP-alpha-D-glucuronate + NAD(+) = UDP-beta-L-threo-pentopyranos-4-ulose + CO2 + NADH. It carries out the reaction UDP-4-amino-4-deoxy-beta-L-arabinose + (6R)-10-formyltetrahydrofolate = UDP-4-deoxy-4-formamido-beta-L-arabinose + (6S)-5,6,7,8-tetrahydrofolate + H(+). The protein operates within nucleotide-sugar biosynthesis; UDP-4-deoxy-4-formamido-beta-L-arabinose biosynthesis; UDP-4-deoxy-4-formamido-beta-L-arabinose from UDP-alpha-D-glucuronate: step 1/3. It participates in nucleotide-sugar biosynthesis; UDP-4-deoxy-4-formamido-beta-L-arabinose biosynthesis; UDP-4-deoxy-4-formamido-beta-L-arabinose from UDP-alpha-D-glucuronate: step 3/3. It functions in the pathway bacterial outer membrane biogenesis; lipopolysaccharide biosynthesis. Bifunctional enzyme that catalyzes the oxidative decarboxylation of UDP-glucuronic acid (UDP-GlcUA) to UDP-4-keto-arabinose (UDP-Ara4O) and the addition of a formyl group to UDP-4-amino-4-deoxy-L-arabinose (UDP-L-Ara4N) to form UDP-L-4-formamido-arabinose (UDP-L-Ara4FN). The modified arabinose is attached to lipid A and is required for resistance to polymyxin and cationic antimicrobial peptides. In Pseudomonas aeruginosa (strain ATCC 15692 / DSM 22644 / CIP 104116 / JCM 14847 / LMG 12228 / 1C / PRS 101 / PAO1), this protein is Bifunctional polymyxin resistance protein ArnA.